Reading from the N-terminus, the 213-residue chain is Endoplasmic reticulum vesicle protein 25 (213 aa).

A signal peptide spans 1–20; the sequence is MILRIPSLLYLFTLLTAVYA. The Lumenal portion of the chain corresponds to 21–181; that stretch reads VKFDLTSDRN…TNESTNQRVK (161 aa). The 90-residue stretch at 33-122 folds into the GOLD domain; that stretch reads PSIIWNFASA…VRSVELDVDI (90 aa). Residues 182–202 form a helical membrane-spanning segment; the sequence is VFSVLIICCTIGLGVWQLLHL. The Cytoplasmic segment spans residues 203–213; sequence RSFFKRKYLID.

This sequence belongs to the EMP24/GP25L family.

The protein localises to the endoplasmic reticulum membrane. It localises to the golgi apparatus membrane. Constituent of COPII-coated endoplasmic reticulum-derived transport vesicles. Required for efficient transport of a subset of secretory proteins to the Golgi. Facilitates retrograde transport from the Golgi to the endoplasmic reticulum. This Cryptococcus neoformans var. neoformans serotype D (strain B-3501A) (Filobasidiella neoformans) protein is Endoplasmic reticulum vesicle protein 25 (ERV25).